The primary structure comprises 381 residues: Pyrimidine monooxygenase RutA (381 aa).

Residues 66–67 (IK), N132, E141, 157–158 (RY), and S207 contribute to the FMN site.

This sequence belongs to the NtaA/SnaA/DszA monooxygenase family. RutA subfamily.

The enzyme catalyses uracil + FMNH2 + NADH + O2 = (Z)-3-ureidoacrylate + FMN + NAD(+) + H2O + H(+). It catalyses the reaction thymine + FMNH2 + NADH + O2 = (Z)-2-methylureidoacrylate + FMN + NAD(+) + H2O + H(+). In terms of biological role, catalyzes the pyrimidine ring opening between N-3 and C-4 by an unusual flavin hydroperoxide-catalyzed mechanism, adding oxygen atoms in the process to yield ureidoacrylate peracid, that immediately reacts with FMN forming ureidoacrylate and FMN-N(5)-oxide. The FMN-N(5)-oxide reacts spontaneously with NADH to produce FMN. Requires the flavin reductase RutF to regenerate FMN in vivo. In Methylobacterium radiotolerans (strain ATCC 27329 / DSM 1819 / JCM 2831 / NBRC 15690 / NCIMB 10815 / 0-1), this protein is Pyrimidine monooxygenase RutA.